We begin with the raw amino-acid sequence, 133 residues long: Large ribosomal subunit protein uL22 (133 aa).

The protein belongs to the universal ribosomal protein uL22 family. As to quaternary structure, part of the 50S ribosomal subunit.

This protein binds specifically to 23S rRNA; its binding is stimulated by other ribosomal proteins, e.g. L4, L17, and L20. It is important during the early stages of 50S assembly. It makes multiple contacts with different domains of the 23S rRNA in the assembled 50S subunit and ribosome. Its function is as follows. The globular domain of the protein is located near the polypeptide exit tunnel on the outside of the subunit, while an extended beta-hairpin is found that lines the wall of the exit tunnel in the center of the 70S ribosome. The polypeptide is Large ribosomal subunit protein uL22 (Aquifex aeolicus (strain VF5)).